Reading from the N-terminus, the 522-residue chain is MVRSGKNGDLHLKQIAYYKRTGEYHPTTLPSERSGIRRAAKKFVFKDKKLFYVGEDRKQNRLVIVSEEEKKKVLRECHENDSGAHHGISRTLTLVESNYYWTSVTNDVKQWVYACQHCQVAKNTVIVAPKQHLLKVENPWSLVTVDLMGPFHTSNRSHVYAIIMTDLFTKWVVILPLCDVSASEVSKAIINIFFLYGPPQKIIMDQRDEFIQQINIELYRLFGIKQIVISHTSGTVSPMETTPSTIKAFLSKHCADHPNNWDDHLSAVSFAFNVTHLEPTKNTPYFQMFSRNPYMPETSDSLHDVDGDNTSMFAKILDAIKEADEIMENKTTSLGQMENNNLDELNKSKIIVKKKPKQLNPFHLKVGHEVLRQRKNWWKDGRFQSEWVGPCVIDYITESGCAVLRDNTGVRLKRPIKMSHLKPYIRESSEQESLYLLQGSVVADHDYIGLPEIPVGAYQANILVEDATIGIVDNELLTSSKDRELLEYRNTKISPLIDDHSTLEKQTFSLLDSSNQVLEYLS.

In terms of domain architecture, Integrase catalytic spans lysine 135–asparagine 292.

The chain is Gypsy retrotransposon integrase-like protein 1 (GIN1) from Macaca fascicularis (Crab-eating macaque).